The following is a 100-amino-acid chain: NADH-quinone oxidoreductase subunit K (100 aa).

The next 3 membrane-spanning stretches (helical) occupy residues 4-24 (TSYY…GVLI), 29-49 (LVLF…LVTF), and 60-80 (IVVF…LALL).

The protein belongs to the complex I subunit 4L family. NDH-1 is composed of 14 different subunits. Subunits NuoA, H, J, K, L, M, N constitute the membrane sector of the complex.

It is found in the cell membrane. It catalyses the reaction a quinone + NADH + 5 H(+)(in) = a quinol + NAD(+) + 4 H(+)(out). Functionally, NDH-1 shuttles electrons from NADH, via FMN and iron-sulfur (Fe-S) centers, to quinones in the respiratory chain. The immediate electron acceptor for the enzyme in this species is believed to be ubiquinone. Couples the redox reaction to proton translocation (for every two electrons transferred, four hydrogen ions are translocated across the cytoplasmic membrane), and thus conserves the redox energy in a proton gradient. The polypeptide is NADH-quinone oxidoreductase subunit K (Roseiflexus sp. (strain RS-1)).